The sequence spans 259 residues: UPF0758 protein Bphyt_3148 (259 aa).

The MPN domain maps to 137–259 (LLNSPEAVEN…VYSFARAGWP (123 aa)). 3 residues coordinate Zn(2+): His208, His210, and Asp221. Residues 208–221 (HNHPSGAVQPSASD) carry the JAMM motif motif.

The protein belongs to the UPF0758 family.

The sequence is that of UPF0758 protein Bphyt_3148 from Paraburkholderia phytofirmans (strain DSM 17436 / LMG 22146 / PsJN) (Burkholderia phytofirmans).